Here is a 138-residue protein sequence, read N- to C-terminus: Protein FAM216B (138 aa).

This sequence belongs to the FAM216 family.

This is Protein FAM216B (Fam216b) from Mus musculus (Mouse).